The chain runs to 295 residues: Lipoyl synthase (295 aa).

[4Fe-4S] cluster is bound by residues Cys34, Cys39, Cys45, Cys60, Cys64, Cys67, and Ser273. The region spanning Trp46 to Ser262 is the Radical SAM core domain.

It belongs to the radical SAM superfamily. Lipoyl synthase family. The cofactor is [4Fe-4S] cluster.

The protein resides in the cytoplasm. The enzyme catalyses [[Fe-S] cluster scaffold protein carrying a second [4Fe-4S](2+) cluster] + N(6)-octanoyl-L-lysyl-[protein] + 2 oxidized [2Fe-2S]-[ferredoxin] + 2 S-adenosyl-L-methionine + 4 H(+) = [[Fe-S] cluster scaffold protein] + N(6)-[(R)-dihydrolipoyl]-L-lysyl-[protein] + 4 Fe(3+) + 2 hydrogen sulfide + 2 5'-deoxyadenosine + 2 L-methionine + 2 reduced [2Fe-2S]-[ferredoxin]. Its pathway is protein modification; protein lipoylation via endogenous pathway; protein N(6)-(lipoyl)lysine from octanoyl-[acyl-carrier-protein]: step 2/2. In terms of biological role, catalyzes the radical-mediated insertion of two sulfur atoms into the C-6 and C-8 positions of the octanoyl moiety bound to the lipoyl domains of lipoate-dependent enzymes, thereby converting the octanoylated domains into lipoylated derivatives. The protein is Lipoyl synthase of Anaplasma marginale (strain St. Maries).